The primary structure comprises 210 residues: Imidazoleglycerol-phosphate dehydratase (210 aa).

Residues 185 to 210 (PRRGGSIPSSKGVLEQAGDNNTEKSK) form a disordered region.

The protein belongs to the imidazoleglycerol-phosphate dehydratase family.

The protein resides in the cytoplasm. It catalyses the reaction D-erythro-1-(imidazol-4-yl)glycerol 3-phosphate = 3-(imidazol-4-yl)-2-oxopropyl phosphate + H2O. It participates in amino-acid biosynthesis; L-histidine biosynthesis; L-histidine from 5-phospho-alpha-D-ribose 1-diphosphate: step 6/9. The chain is Imidazoleglycerol-phosphate dehydratase from Prochlorococcus marinus (strain SARG / CCMP1375 / SS120).